The following is a 161-amino-acid chain: Cytochrome c-type biogenesis protein CcmE (161 aa).

Residues 1–8 lie on the Cytoplasmic side of the membrane; sequence MNPRRQKR. Residues 9–29 form a helical; Signal-anchor for type II membrane protein membrane-spanning segment; the sequence is LGIILAILIGVSATIGLMIYA. Over 30–161 the chain is Periplasmic; sequence LNQNMDLFYT…SEEQKQGSGQ (132 aa). Residues His-129 and Tyr-133 each coordinate heme.

This sequence belongs to the CcmE/CycJ family.

It is found in the cell inner membrane. Its function is as follows. Heme chaperone required for the biogenesis of c-type cytochromes. Transiently binds heme delivered by CcmC and transfers the heme to apo-cytochromes in a process facilitated by CcmF and CcmH. This Vibrio vulnificus (strain CMCP6) protein is Cytochrome c-type biogenesis protein CcmE.